The following is a 260-amino-acid chain: Arginine esterase (260 aa).

Residues 1 to 17 (MWFLALCLAMSLGWTGA) form the signal peptide. A propeptide spans 18-24 (EPHFQPR) (activation peptide). Residues 25-257 (IIGGRECLKN…HLMWIKDTMK (233 aa)) enclose the Peptidase S1 domain. Disulfide bonds link Cys31/Cys172, Cys50/Cys66, Cys151/Cys218, Cys183/Cys197, and Cys208/Cys233. Residue His65 is the Charge relay system of the active site. A glycan (N-linked (GlcNAc...) asparagine) is linked at Asn79. Residue Asp119 is the Charge relay system of the active site. Ser212 acts as the Charge relay system in catalysis.

The protein belongs to the peptidase S1 family. Kallikrein subfamily.

It catalyses the reaction Preferential cleavage of Arg-|-Xaa bonds in small molecule substrates. Highly selective action to release kallidin (lysyl-bradykinin) from kininogen involves hydrolysis of Met-|-Xaa or Leu-|-Xaa.. This serine protease is found in dog seminal plasma, its exact physiological function is not known. The chain is Arginine esterase from Canis lupus familiaris (Dog).